Reading from the N-terminus, the 476-residue chain is Glycogen synthase (476 aa).

ADP-alpha-D-glucose is bound at residue Lys15.

Belongs to the glycosyltransferase 1 family. Bacterial/plant glycogen synthase subfamily.

The enzyme catalyses [(1-&gt;4)-alpha-D-glucosyl](n) + ADP-alpha-D-glucose = [(1-&gt;4)-alpha-D-glucosyl](n+1) + ADP + H(+). It functions in the pathway glycan biosynthesis; glycogen biosynthesis. Functionally, synthesizes alpha-1,4-glucan chains using ADP-glucose. The protein is Glycogen synthase of Bacillus cereus (strain ATCC 14579 / DSM 31 / CCUG 7414 / JCM 2152 / NBRC 15305 / NCIMB 9373 / NCTC 2599 / NRRL B-3711).